Consider the following 188-residue polypeptide: Deoxycytidylate deaminase (188 aa).

Residues 1-171 (MKASTVLQIA…DILRNAGIEV (171 aa)) enclose the CMP/dCMP-type deaminase domain. Zn(2+)-binding residues include cysteine 19, cysteine 49, histidine 94, glutamate 102, and histidine 104. Glutamate 106 acts as the Proton donor in catalysis. Zn(2+) contacts are provided by cysteine 132 and cysteine 135.

This sequence belongs to the cytidine and deoxycytidylate deaminase family. Homohexamer. It depends on Zn(2+) as a cofactor.

The catalysed reaction is dCMP + H2O + H(+) = dUMP + NH4(+). Allosteric enzyme whose activity is greatly influenced by the end products of its metabolic pathway, dCTP and dTTP. Its function is as follows. Supplies the nucleotide substrate for thymidylate synthetase. The polypeptide is Deoxycytidylate deaminase (CD) (Enterobacteria phage T2 (Bacteriophage T2)).